Here is a 304-residue protein sequence, read N- to C-terminus: Glutaminase (304 aa).

Positions 63, 113, 157, 164, 188, 240, and 258 each coordinate substrate.

The protein belongs to the glutaminase family. As to quaternary structure, homotetramer.

The enzyme catalyses L-glutamine + H2O = L-glutamate + NH4(+). The sequence is that of Glutaminase from Chromobacterium violaceum (strain ATCC 12472 / DSM 30191 / JCM 1249 / CCUG 213 / NBRC 12614 / NCIMB 9131 / NCTC 9757 / MK).